We begin with the raw amino-acid sequence, 623 residues long: MPKLEQRFDYVKIGLASPERIRQWGERTLPNNQVVGEVTKPETINYRTLKPEMDGLFCERIFGPAKDWECHCGKYKRVRHRGIVCERCGVEVTESRVRRHRMGYIKLAAPVTHVWYLKGIPSYMATLLDMPLRDVEQIVYFNAYVVLDPGNADTLSYKQLLTEDQWIEIEDQIYSEDSQLEGIEVGIGAEAVQRLLQDIKLETEAETLREDIGNAKGQKRAKLIKRLRVIDNFVGTGSQTDWMVLSVIPVIPPDLRPMVQLDGGRFATSDLNDLYRRVINRNNRLARLQEILAPEIIVRNEKRMLQEAVDALIDNGRRGRTVVGANNRPLKSLSDIIEGKQGRFRQNLLGKRVDYSGRSVIVVGPKLKMHQCGLPKEMAIELFQPFVIHRLIGQGLVNNIKAAKRLIQRNDPVIWDVLEEVIEGHPVMLNRAPTLHRLGIQAFEPILVDGRAIQLHPLVCPAFNADFDGDQMAVHVPLSIEAQSEARLLMLASNNILSPATGRPIVTPSQDMVLGAYYLTADNPGRQNGAGKYFAGLDDAIMAYEQQQVDLHAYVWVRFDGPVDDGEDDVEPEVETSADGVVTQTYPSRRIRKDADGTLISQYIRTTPGRIIYNKTIQDSLAS.

Positions 70, 72, 85, and 88 each coordinate Zn(2+). 3 residues coordinate Mg(2+): Asp-466, Asp-468, and Asp-470.

Belongs to the RNA polymerase beta' chain family. RpoC1 subfamily. In cyanobacteria the RNAP catalytic core is composed of 2 alpha, 1 beta, 1 beta', 1 gamma and 1 omega subunit. When a sigma factor is associated with the core the holoenzyme is formed, which can initiate transcription. Mg(2+) serves as cofactor. Requires Zn(2+) as cofactor.

It catalyses the reaction RNA(n) + a ribonucleoside 5'-triphosphate = RNA(n+1) + diphosphate. DNA-dependent RNA polymerase catalyzes the transcription of DNA into RNA using the four ribonucleoside triphosphates as substrates. The chain is DNA-directed RNA polymerase subunit gamma from Acaryochloris marina (strain MBIC 11017).